The sequence spans 670 residues: MRTALLEVGLEELPASEFYNILEQLETRTRELLKANRIQCDSIEVFVGSRRFGVLLRGLPEKQEGFVEEKKGPPLNVAYDSKGAPTRALEGFLRKNNATFEDIIEKDGYVYISRKIEGKAVEEVLPEVFEDLVMGMSFKKPMRWGTGEYEYVRPVHWIVAMLDDRVLNLTLFGLRASHVSYGKRYHSGALKINTPEEYYEVLKSGYVMASHEERKKSVLKQLEDFERTYGMKVERDEALIAEIVAMTEYPRILVGQFDQKYLELPEEIIVTAVKHHQRAFVAHKDGLTNFFVAFQDGPQSSENVVKGYERVINARLEDARYYFHKDLEMSLGEMNERLKGIVFQERLGTLYDKVERIVKISRKICGELKFPEDFTEKVLKVASLCKADIASKVVYEFPELQGVMGRIYALKEGMDEELAFAIEDHYSENPETVIGSVLGMADRLDTIVGNFAIGNIPTSSKDPYGLKGKADTVFRIVRKNEWDVSLEELLNFAASLVGFHLSNDLEEFFSSRFYQFLINEIGVSYDVARAVNHLWKKPLRGTLAAEALQNISERPEFQDLFVGFERVHNITKKHDSREFDGALFEKEEEKRLMNKFFEVKEKVLKALERLNYEEALQYLIELKPYIDEYFDNVFVMVNRDDLRMNRLGFLKNIDDLFMMIGDMSHLVKRT.

Belongs to the class-II aminoacyl-tRNA synthetase family. Tetramer of two alpha and two beta subunits.

The protein resides in the cytoplasm. The enzyme catalyses tRNA(Gly) + glycine + ATP = glycyl-tRNA(Gly) + AMP + diphosphate. The sequence is that of Glycine--tRNA ligase beta subunit from Thermotoga neapolitana (strain ATCC 49049 / DSM 4359 / NBRC 107923 / NS-E).